A 397-amino-acid chain; its full sequence is Purine ribonucleoside efflux pump NepI (397 aa).

At 1–21 (MNENIAEKFRADGVARPNWSA) the chain is on the cytoplasmic side. A helical membrane pass occupies residues 22-42 (VFAVAFCVACLITVEFLPVSL). Over 43–54 (LTPMAQDLGISE) the chain is Periplasmic. Residues 55 to 75 (GIAGQSVTVTAFVAMFSSLFI) form a helical membrane-spanning segment. The Cytoplasmic segment spans residues 76–85 (TQIIQATDRR). A helical membrane pass occupies residues 86–106 (YIVILFAVLLTASCLMVSFAN). Position 107 (Ser-107) is a topological domain, periplasmic. The helical transmembrane segment at 108–128 (FTLLLLGRACLGLALGGFWAM) threads the bilayer. Residues 129-147 (SASLTMRLVPARTVPKALS) are Cytoplasmic-facing. The helical transmembrane segment at 148–168 (VIFGAVSIALVIAAPLGSFLG) threads the bilayer. The Periplasmic segment spans residues 169-175 (GIIGWRN). The chain crosses the membrane as a helical span at residues 176 to 196 (VFNAAAVMGVLCVIWVVKSLP). Residues 197-215 (SLPGEPSHQKQNMFSLLQR) are Cytoplasmic-facing. Residues 216–236 (PGVMAGMIAIFMSFAGQFAFF) form a helical membrane-spanning segment. Over 237-255 (TYIRPVYMNLAGFDVDGLT) the chain is Periplasmic. A helical membrane pass occupies residues 256–276 (LVLLSFGIASFVGTSFSSYVL). Residues 277–281 (KRSVK) are Cytoplasmic-facing. Residues 282 to 302 (LALAGAPLLLALSALTLIVWG) traverse the membrane as a helical segment. The Periplasmic segment spans residues 303–305 (SDK). Residues 306–326 (TVAAVIAIIWGLAFALVPVGW) form a helical membrane-spanning segment. Residues 327 to 343 (STWITRSLADQAEKAGS) lie on the Cytoplasmic side of the membrane. The chain crosses the membrane as a helical span at residues 344–364 (IQVAVIQLANTCGAAVGGYAL). Residues 365-366 (DN) are Periplasmic-facing. A helical transmembrane segment spans residues 367 to 387 (FGLLSPLALSGCLMLLTALVV). At 388–397 (AAKVRITPMS) the chain is on the cytoplasmic side.

Belongs to the major facilitator superfamily. DHA1 family. NepI (TC 2.A.1.2.26) subfamily.

It is found in the cell inner membrane. The catalysed reaction is inosine(in) + H(+)(out) = inosine(out) + H(+)(in). The enzyme catalyses guanosine(in) + H(+)(out) = guanosine(out) + H(+)(in). Involved in the efflux of purine ribonucleosides, such as inosine and guanosine. This chain is Purine ribonucleoside efflux pump NepI, found in Salmonella enteritidis PT4 (strain P125109).